The primary structure comprises 496 residues: Beta-amylase (496 aa).

Positions 54, 94, and 102 each coordinate substrate. The active-site Proton donor is E187. K296, H301, and T343 together coordinate substrate. The active-site Proton acceptor is E381. Substrate-binding positions include 382 to 383 (NA) and R421.

It belongs to the glycosyl hydrolase 14 family.

It catalyses the reaction Hydrolysis of (1-&gt;4)-alpha-D-glucosidic linkages in polysaccharides so as to remove successive maltose units from the non-reducing ends of the chains.. The sequence is that of Beta-amylase (BMY1) from Vigna unguiculata (Cowpea).